The sequence spans 210 residues: Large ribosomal subunit protein uL22 (210 aa).

The tract at residues N123–K210 is disordered. The segment covering T126 to T157 has biased composition (basic and acidic residues). Over residues K158–P185 the composition is skewed to low complexity.

Belongs to the universal ribosomal protein uL22 family. In terms of assembly, part of the 50S ribosomal subunit.

This protein binds specifically to 23S rRNA; its binding is stimulated by other ribosomal proteins, e.g. L4, L17, and L20. It is important during the early stages of 50S assembly. It makes multiple contacts with different domains of the 23S rRNA in the assembled 50S subunit and ribosome. In terms of biological role, the globular domain of the protein is located near the polypeptide exit tunnel on the outside of the subunit, while an extended beta-hairpin is found that lines the wall of the exit tunnel in the center of the 70S ribosome. The protein is Large ribosomal subunit protein uL22 of Metamycoplasma arthritidis (strain 158L3-1) (Mycoplasma arthritidis).